Reading from the N-terminus, the 716-residue chain is Antibacterial effector protein Tle3 (716 aa).

The segment at 68-87 is disordered; that stretch reads PTLPGGQANPGYLTPAGYSL.

Interacts in the cytoplasm with the adapter protein Tla3. Interacts in the periplasm with the immunity protein Tli3.

The protein localises to the secreted. Its subcellular location is the host periplasm. Its activity is regulated as follows. Neutralized by the immunity protein Tli3 in the periplasm of P.aeruginosa cells. Its function is as follows. Antibacterial effector. Is toxic once delivered in the periplasm of prey bacteria. This chain is Antibacterial effector protein Tle3, found in Pseudomonas aeruginosa (strain ATCC 15692 / DSM 22644 / CIP 104116 / JCM 14847 / LMG 12228 / 1C / PRS 101 / PAO1).